Reading from the N-terminus, the 182-residue chain is Sec-independent protein translocase protein TatB (182 aa).

Residues 1-21 (MFDIGFSELLLVFVIGLIVLG) form a helical membrane-spanning segment. 2 disordered regions span residues 88-107 (AAES…ASDE) and 121-182 (TQHE…SDKP). The segment covering 168-182 (AAPVVESSPSSSDKP) has biased composition (low complexity).

It belongs to the TatB family. The Tat system comprises two distinct complexes: a TatABC complex, containing multiple copies of TatA, TatB and TatC subunits, and a separate TatA complex, containing only TatA subunits. Substrates initially bind to the TatABC complex, which probably triggers association of the separate TatA complex to form the active translocon.

The protein resides in the cell inner membrane. Part of the twin-arginine translocation (Tat) system that transports large folded proteins containing a characteristic twin-arginine motif in their signal peptide across membranes. Together with TatC, TatB is part of a receptor directly interacting with Tat signal peptides. TatB may form an oligomeric binding site that transiently accommodates folded Tat precursor proteins before their translocation. The protein is Sec-independent protein translocase protein TatB of Salmonella typhi.